Consider the following 101-residue polypeptide: uncharacterized protein (101 aa).

Its subcellular location is the mitochondrion. This is an uncharacterized protein from Arabidopsis thaliana (Mouse-ear cress).